The following is a 37-amino-acid chain: Esculentin-2P (37 aa).

A disulfide bridge links cysteine 31 with cysteine 37.

In terms of tissue distribution, expressed by the skin glands.

The protein resides in the secreted. Antibacterial activity against Gram-negative bacterium E.coli. This chain is Esculentin-2P, found in Lithobates pipiens (Northern leopard frog).